Consider the following 362-residue polypeptide: sn-glycerol-3-phosphate import ATP-binding protein UgpC (362 aa).

The ABC transporter domain occupies 4-235 (LKLQAVTKSY…PATLFVASFI (232 aa)). 37–44 (GPSGCGKS) serves as a coordination point for ATP.

The protein belongs to the ABC transporter superfamily. sn-glycerol-3-phosphate importer (TC 3.A.1.1.3) family. As to quaternary structure, the complex is composed of two ATP-binding proteins (UgpC), two transmembrane proteins (UgpA and UgpE) and a solute-binding protein (UgpB).

It is found in the cell inner membrane. The catalysed reaction is sn-glycerol 3-phosphate(out) + ATP + H2O = sn-glycerol 3-phosphate(in) + ADP + phosphate + H(+). In terms of biological role, part of the ABC transporter complex UgpBAEC involved in sn-glycerol-3-phosphate (G3P) import. Responsible for energy coupling to the transport system. This Yersinia enterocolitica serotype O:8 / biotype 1B (strain NCTC 13174 / 8081) protein is sn-glycerol-3-phosphate import ATP-binding protein UgpC.